The chain runs to 1297 residues: DNA-directed RNA polymerase subunit beta' (1297 aa).

Positions 60, 62, 75, and 78 each coordinate Zn(2+). 3 residues coordinate Mg(2+): D535, D537, and D539. Zn(2+)-binding residues include C883, C961, C968, and C971.

This sequence belongs to the RNA polymerase beta' chain family. The RNAP catalytic core consists of 2 alpha, 1 beta, 1 beta' and 1 omega subunit. When a sigma factor is associated with the core the holoenzyme is formed, which can initiate transcription. Requires Mg(2+) as cofactor. Zn(2+) is required as a cofactor.

It carries out the reaction RNA(n) + a ribonucleoside 5'-triphosphate = RNA(n+1) + diphosphate. Its function is as follows. DNA-dependent RNA polymerase catalyzes the transcription of DNA into RNA using the four ribonucleoside triphosphates as substrates. The polypeptide is DNA-directed RNA polymerase subunit beta' (Salinispora tropica (strain ATCC BAA-916 / DSM 44818 / JCM 13857 / NBRC 105044 / CNB-440)).